The sequence spans 213 residues: Orotate phosphoribosyltransferase (213 aa).

Lysine 26 lines the 5-phospho-alpha-D-ribose 1-diphosphate pocket. 34-35 (FF) provides a ligand contact to orotate. 5-phospho-alpha-D-ribose 1-diphosphate-binding positions include 72-73 (YK), arginine 99, lysine 100, lysine 103, histidine 105, and 124-132 (DDVITAGTA). The orotate site is built by threonine 128 and arginine 156.

This sequence belongs to the purine/pyrimidine phosphoribosyltransferase family. PyrE subfamily. In terms of assembly, homodimer. Requires Mg(2+) as cofactor.

It catalyses the reaction orotidine 5'-phosphate + diphosphate = orotate + 5-phospho-alpha-D-ribose 1-diphosphate. Its pathway is pyrimidine metabolism; UMP biosynthesis via de novo pathway; UMP from orotate: step 1/2. Its function is as follows. Catalyzes the transfer of a ribosyl phosphate group from 5-phosphoribose 1-diphosphate to orotate, leading to the formation of orotidine monophosphate (OMP). The sequence is that of Orotate phosphoribosyltransferase from Escherichia coli O127:H6 (strain E2348/69 / EPEC).